A 138-amino-acid chain; its full sequence is Large ribosomal subunit protein eL32 (138 aa).

Belongs to the eukaryotic ribosomal protein eL32 family.

The chain is Large ribosomal subunit protein eL32 from Saccharolobus islandicus (strain Y.N.15.51 / Yellowstone #2) (Sulfolobus islandicus).